Consider the following 420-residue polypeptide: Glycerol-3-phosphate dehydrogenase [NAD(+)] 2, chloroplastic (420 aa).

The transit peptide at 1–45 (MAASVQPACLDLHFSGKHPPLLKHNAIIVRCVSSPNVIPEADSIS) directs the protein to the chloroplast. NAD(+) contacts are provided by residues 94–99 (GGGSFG), F171, K194, and A228. Position 194 (K194) interacts with substrate. K279 acts as the Proton acceptor in catalysis. R343 and E369 together coordinate NAD(+). Substrate is bound at residue 343–344 (RN).

The protein belongs to the NAD-dependent glycerol-3-phosphate dehydrogenase family.

It localises to the plastid. Its subcellular location is the chloroplast. The enzyme catalyses sn-glycerol 3-phosphate + NAD(+) = dihydroxyacetone phosphate + NADH + H(+). Its pathway is membrane lipid metabolism; glycerophospholipid metabolism. Functionally, required to supply glycerol-3-phosphate in the chloroplast for the synthesis of glycerolipids. Required for activation of systemic acquired resistance (SAR). Provision of glycerol-3-phosphate may be involved in generating lipid signals necessary for mediating defense responses and SAR. This chain is Glycerol-3-phosphate dehydrogenase [NAD(+)] 2, chloroplastic (GLY1), found in Arabidopsis thaliana (Mouse-ear cress).